We begin with the raw amino-acid sequence, 150 residues long: Arginine repressor (150 aa).

The protein belongs to the ArgR family.

It localises to the cytoplasm. The protein operates within amino-acid biosynthesis; L-arginine biosynthesis [regulation]. Its function is as follows. Regulates arginine biosynthesis genes. The sequence is that of Arginine repressor from Clostridium botulinum (strain ATCC 19397 / Type A).